The chain runs to 819 residues: Leucine--tRNA ligase (819 aa).

The 'HIGH' region signature appears at 51-61 (PYPSGNLHIGH). The 'KMSKS' region motif lies at 586-590 (KMSKS). Lysine 589 contributes to the ATP binding site.

This sequence belongs to the class-I aminoacyl-tRNA synthetase family.

The protein localises to the cytoplasm. The enzyme catalyses tRNA(Leu) + L-leucine + ATP = L-leucyl-tRNA(Leu) + AMP + diphosphate. The sequence is that of Leucine--tRNA ligase from Deinococcus geothermalis (strain DSM 11300 / CIP 105573 / AG-3a).